An 846-amino-acid chain; its full sequence is ATR-interacting protein mus304 (846 aa).

Disordered regions lie at residues 20–40 (DVSV…FDGI), 90–109 (QGST…QKKP), and 135–162 (EPQK…KTTT). Residues 144–162 (TSTSRITTSSISVQQKTTT) show a composition bias toward low complexity. Coiled coils occupy residues 168–240 (ATQS…LADE) and 327–359 (EYSE…LQAK). Residues 504 to 510 (EELLFDL) carry the EEXXXDL motif motif. The interval 651 to 681 (GAVQGSVSNGSTSASVSNPNQNSNSSTTQRG) is disordered. Residues 655 to 676 (GSVSNGSTSASVSNPNQNSNSS) are compositionally biased toward low complexity.

The protein belongs to the ATRIP family. Interacts with ATR/mei-41. As to expression, highly expressed in the oocyte and nurse cells from stage 5 onward and in embryos prior to during nuclear division 14. Then, it decreases to background levels during interphase 14. Weakly or not expressed in stage embryos and imaginal disks.

It localises to the cytoplasm. In terms of biological role, DNA damage checkpoint protein required for chromosome break repair and for genomic stability during development. This chain is ATR-interacting protein mus304 (mus304), found in Drosophila melanogaster (Fruit fly).